We begin with the raw amino-acid sequence, 63 residues long: Large ribosomal subunit protein bL28 (63 aa).

This sequence belongs to the bacterial ribosomal protein bL28 family.

This is Large ribosomal subunit protein bL28 from Geobacter sulfurreducens (strain ATCC 51573 / DSM 12127 / PCA).